Consider the following 485-residue polypeptide: Zinc finger protein 639 (485 aa).

Over residues 1-14 (MSEYPKKRKRKTLH) the composition is skewed to basic residues. 2 disordered regions span residues 1–23 (MSEY…DSSG) and 54–82 (DNKD…SRSQ). The residue at position 60 (Ser-60) is a Phosphoserine. Lys-76 participates in a covalent cross-link: Glycyl lysine isopeptide (Lys-Gly) (interchain with G-Cter in SUMO2). Position 88 is a phosphoserine (Ser-88). Residues Lys-177, Lys-181, and Lys-226 each participate in a glycyl lysine isopeptide (Lys-Gly) (interchain with G-Cter in SUMO2) cross-link. 8 C2H2-type zinc fingers span residues 204-227 (YKCE…ILKH), 233-255 (NVCR…AKLH), 260-283 (YICK…ADTH), 289-311 (YWCE…FQEH), 374-397 (FVCQ…AIEH), 403-425 (HVCD…LNSH), 431-454 (YLCQ…DFKH), and 460-482 (HKCS…LPVH). Residues 371-455 (KNFFVCQVCG…LKIHLDFKHS (85 aa)) form an interaction with CTNNA2 region.

Belongs to the krueppel C2H2-type zinc-finger protein family. As to quaternary structure, interacts with CTNNA2.

The protein resides in the nucleus. In terms of biological role, binds DNA and may function as a transcriptional repressor. This Rattus norvegicus (Rat) protein is Zinc finger protein 639 (Znf639).